Here is a 336-residue protein sequence, read N- to C-terminus: MSLKLGVIGTGAIGRDHIRRCSQTLLNSQVVAVTDINLEQAAKVVADLKLDAEVYPDGHALINSPQVEAVLVTSWGPSHEEFVLAAIAAGKPVFCEKPLAVTAEGCRRIVDAEVAYGKRLVQVGFMRPYDEGYRALKAVIDSGQIGEPLMLHCAHRNPTVGENYKTDMAITDTLIHELDVLRWLLNDDYVSVQVVFPRKSSKALAHLRDPQIVLLETAKGTRIDVEVFVNCQYGYDIQCEVVGETGIAKLPEPSQVQLRSGAKLSNAILMDWKDRFIGAYDVELQAFIDSVRAGQVGGPSAWDGFAAAVAADACIEAQGSEQIVKMSLPDRPRFYG.

Belongs to the Gfo/Idh/MocA family. As to quaternary structure, homotetramer.

The catalysed reaction is myo-inositol + NAD(+) = scyllo-inosose + NADH + H(+). Its function is as follows. Involved in the oxidation of myo-inositol (MI) to 2-keto-myo-inositol (2KMI or 2-inosose). This is Inositol 2-dehydrogenase from Pseudomonas fluorescens (strain SBW25).